We begin with the raw amino-acid sequence, 504 residues long: Peroxisomal catalase (504 aa).

Residues His63 and Asn136 contribute to the active site. Tyr345 lines the heme pocket. The short motif at 502–504 (NKF) is the Microbody targeting signal element.

This sequence belongs to the catalase family. Heme serves as cofactor.

Its subcellular location is the peroxisome matrix. The catalysed reaction is 2 H2O2 = O2 + 2 H2O. Functionally, catalyzes the degradation of hydrogen peroxide (H(2)O(2)) generated by peroxisomal oxidases to water and oxygen, thereby protecting cells from the toxic effects of hydrogen peroxide. This Candida boidinii (Yeast) protein is Peroxisomal catalase (CTA1).